Here is a 236-residue protein sequence, read N- to C-terminus: T-cell surface glycoprotein CD8 alpha chain (236 aa).

Residues 1 to 26 (MASRVICFLSLNLLLLDVITRLQVSG) form the signal peptide. The 104-residue stretch at 27-130 (QLQLSPKKVD…ITSNSVMYFS (104 aa)) folds into the Ig-like V-type domain. The Extracellular segment spans residues 27–189 (QLQLSPKKVD…MGLGFACDIY (163 aa)). The cysteines at positions 47 and 119 are disulfide-linked. Asparagine 63 carries an N-linked (GlcNAc...) asparagine glycan. Threonine 144 carries O-linked (GalNAc...) threonine; partial glycosylation. O-linked (GalNAc...) threonine glycans are attached at residues threonine 148, threonine 152, threonine 158, and threonine 160. The disordered stretch occupies residues 150–170 (APTPVPPPTGTPRPLRPEACR). The chain crosses the membrane as a helical span at residues 190–210 (IWAPLAGICAVLLLSLVITLI). Cysteine 211 carries S-palmitoyl cysteine lipidation. Over 211–236 (CCHRNRRRVCKCPRPLVKPRPSEKFV) the chain is Cytoplasmic.

Forms disulfide-linked heterodimers with CD8B at the cell surface. Also forms homodimers in several cell types including NK-cells or peripheral blood T-lymphocytes. Interacts with the MHC class I HLA-A/B2M dimer. Interacts with LCK in a zinc-dependent manner. Palmitoylated, but association with CD8B seems to be more important for the enrichment of CD8A in lipid rafts. Post-translationally, O-glycosylated. In terms of processing, phosphorylated in cytotoxic T-lymphocytes (CTLs) following activation.

The protein localises to the cell membrane. In terms of biological role, integral membrane glycoprotein that plays an essential role in the immune response and serves multiple functions in responses against both external and internal offenses. In T-cells, functions primarily as a coreceptor for MHC class I molecule:peptide complex. The antigens presented by class I peptides are derived from cytosolic proteins while class II derived from extracellular proteins. Interacts simultaneously with the T-cell receptor (TCR) and the MHC class I proteins presented by antigen presenting cells (APCs). In turn, recruits the Src kinase LCK to the vicinity of the TCR-CD3 complex. LCK then initiates different intracellular signaling pathways by phosphorylating various substrates ultimately leading to lymphokine production, motility, adhesion and activation of cytotoxic T-lymphocytes (CTLs). This mechanism enables CTLs to recognize and eliminate infected cells and tumor cells. In NK-cells, the presence of CD8A homodimers at the cell surface provides a survival mechanism allowing conjugation and lysis of multiple target cells. CD8A homodimer molecules also promote the survival and differentiation of activated lymphocytes into memory CD8 T-cells. The protein is T-cell surface glycoprotein CD8 alpha chain (Cd8a) of Rattus norvegicus (Rat).